A 339-amino-acid chain; its full sequence is tRNA N6-adenosine threonylcarbamoyltransferase (339 aa).

2 residues coordinate Fe cation: His-112 and His-116. Residues 135 to 139 (LVSGG), Asp-168, Gly-181, and Asn-273 each bind substrate. A Fe cation-binding site is contributed by Asp-301.

Belongs to the KAE1 / TsaD family. Fe(2+) serves as cofactor.

It localises to the cytoplasm. The catalysed reaction is L-threonylcarbamoyladenylate + adenosine(37) in tRNA = N(6)-L-threonylcarbamoyladenosine(37) in tRNA + AMP + H(+). In terms of biological role, required for the formation of a threonylcarbamoyl group on adenosine at position 37 (t(6)A37) in tRNAs that read codons beginning with adenine. Is involved in the transfer of the threonylcarbamoyl moiety of threonylcarbamoyl-AMP (TC-AMP) to the N6 group of A37, together with TsaE and TsaB. TsaD likely plays a direct catalytic role in this reaction. The polypeptide is tRNA N6-adenosine threonylcarbamoyltransferase (Coxiella burnetii (strain RSA 493 / Nine Mile phase I)).